Reading from the N-terminus, the 263-residue chain is Phosphatidylglycerol--prolipoprotein diacylglyceryl transferase (263 aa).

Transmembrane regions (helical) follow at residues 6–26 (VIFS…VLGI), 50–70 (LLTA…VLIY), 85–105 (TWEG…AVII), and 112–132 (IPTF…LFLG). Residue R133 participates in a 1,2-diacyl-sn-glycero-3-phospho-(1'-sn-glycerol) binding. Transmembrane regions (helical) follow at residues 169–189 (LYEA…LFFL), 197–217 (GALT…VEFF), and 233–253 (MGQL…LGAL).

This sequence belongs to the Lgt family.

The protein resides in the cell membrane. It carries out the reaction L-cysteinyl-[prolipoprotein] + a 1,2-diacyl-sn-glycero-3-phospho-(1'-sn-glycerol) = an S-1,2-diacyl-sn-glyceryl-L-cysteinyl-[prolipoprotein] + sn-glycerol 1-phosphate + H(+). It functions in the pathway protein modification; lipoprotein biosynthesis (diacylglyceryl transfer). Catalyzes the transfer of the diacylglyceryl group from phosphatidylglycerol to the sulfhydryl group of the N-terminal cysteine of a prolipoprotein, the first step in the formation of mature lipoproteins. This chain is Phosphatidylglycerol--prolipoprotein diacylglyceryl transferase, found in Wolbachia pipientis wMel.